The following is a 103-amino-acid chain: UPF0122 protein FN1394 (103 aa).

This sequence belongs to the UPF0122 family.

Might take part in the signal recognition particle (SRP) pathway. This is inferred from the conservation of its genetic proximity to ftsY/ffh. May be a regulatory protein. This Fusobacterium nucleatum subsp. nucleatum (strain ATCC 25586 / DSM 15643 / BCRC 10681 / CIP 101130 / JCM 8532 / KCTC 2640 / LMG 13131 / VPI 4355) protein is UPF0122 protein FN1394.